The following is a 343-amino-acid chain: MGNADERRFEVLRAIVADFVATKEPIGSRALVERHNLGVSSATIRNDMAVLEAEGYITQPHTSSGRVPTEKGYREFVDRLEDVKPLSAAERRAIQSFLESGVDLDDVLRRAVRLLAQLTCQVAVVQYPTLSTSTVRHLEVIALSPARLLMVVITESGRVDQRIAELGDVIDDYQLSQLREMLSQAMGGKKLSAASAAVADLVGRFRGTGGLANAVGRSANVLLESLVEHTEERLLLGGTANLTRNSADFGGSLRSILEALEEQVVVLRLLAAQQEAGKVTVRIGHETAAEQIMGTSMVSTAYGTSGTVYGGMGVLGPTRMDYPGTIASVAAVALYIGEVLGAR.

This sequence belongs to the HrcA family.

Functionally, negative regulator of class I heat shock genes (grpE-dnaK-dnaJ and groELS operons). Prevents heat-shock induction of these operons. The protein is Heat-inducible transcription repressor HrcA of Mycobacterium leprae (strain Br4923).